We begin with the raw amino-acid sequence, 582 residues long: Phosphoribosylaminoimidazole carboxylase (582 aa).

Positions 114 to 305 (KKYLAERGVA…QFENHLRAIL (192 aa)) constitute an ATP-grasp domain. 143–200 (AGRLGLPLMLKAKTLAYDGRGNSPLKSASSEDIQASLKFLGDRPLYAEGWAPFVKEVA) provides a ligand contact to ATP.

The protein in the C-terminal section; belongs to the AIR carboxylase family. Class I subfamily.

It catalyses the reaction 5-amino-1-(5-phospho-D-ribosyl)imidazole-4-carboxylate + H(+) = 5-amino-1-(5-phospho-beta-D-ribosyl)imidazole + CO2. The protein operates within purine metabolism; IMP biosynthesis via de novo pathway; 5-amino-1-(5-phospho-D-ribosyl)imidazole-4-carboxylate from 5-amino-1-(5-phospho-D-ribosyl)imidazole (carboxylase route): step 1/1. In Cryptococcus neoformans var. neoformans serotype D (strain B-3501A) (Filobasidiella neoformans), this protein is Phosphoribosylaminoimidazole carboxylase (ADE2).